A 255-amino-acid chain; its full sequence is Glycine-rich protein DOT1 (255 aa).

An N-terminal signal peptide occupies residues 1–21 (MANHKNLFFLCFLIGLGLCSA). The disordered stretch occupies residues 63–88 (GGGSGEGGGAGGHGEGHIGGGGGGGH).

In terms of tissue distribution, expressed in emerging leaf primordia and young leaves.

The protein localises to the secreted. Functionally, involved in leaf vasculature patterning. The chain is Glycine-rich protein DOT1 from Arabidopsis thaliana (Mouse-ear cress).